We begin with the raw amino-acid sequence, 436 residues long: GTPase Der (436 aa).

EngA-type G domains are found at residues 4–167 (PVVA…KNLP) and 176–351 (VQFC…ENHA). Residues 10–17 (GRPNVGKS), 57–61 (DTGGI), 119–122 (NKLD), 182–189 (GRPNVGKS), 229–233 (DTAGM), and 294–297 (NKWD) each bind GTP. The KH-like domain occupies 352–436 (MRVQTNILND…PIKIFARARK (85 aa)).

Belongs to the TRAFAC class TrmE-Era-EngA-EngB-Septin-like GTPase superfamily. EngA (Der) GTPase family. As to quaternary structure, associates with the 50S ribosomal subunit.

Its function is as follows. GTPase that plays an essential role in the late steps of ribosome biogenesis. The chain is GTPase Der from Bacillus pumilus (strain SAFR-032).